Reading from the N-terminus, the 341-residue chain is Phenylalanine--tRNA ligase alpha subunit (341 aa).

Position 254 (E254) interacts with Mg(2+).

The protein belongs to the class-II aminoacyl-tRNA synthetase family. Phe-tRNA synthetase alpha subunit type 1 subfamily. Tetramer of two alpha and two beta subunits. Requires Mg(2+) as cofactor.

The protein resides in the cytoplasm. It carries out the reaction tRNA(Phe) + L-phenylalanine + ATP = L-phenylalanyl-tRNA(Phe) + AMP + diphosphate + H(+). The polypeptide is Phenylalanine--tRNA ligase alpha subunit (Chlorobaculum parvum (strain DSM 263 / NCIMB 8327) (Chlorobium vibrioforme subsp. thiosulfatophilum)).